The following is an 84-amino-acid chain: Sec-independent protein translocase protein TatA (84 aa).

A helical membrane pass occupies residues 1–21 (MGGFSIWHWLIVLLIVVMVFG). The interval 40–84 (KDGMKDGGQSPADEKPVVPASQVTNAQAADKAERNTIDVEARQKS) is disordered. Residues 69 to 84 (DKAERNTIDVEARQKS) are compositionally biased toward basic and acidic residues.

The protein belongs to the TatA/E family. The Tat system comprises two distinct complexes: a TatABC complex, containing multiple copies of TatA, TatB and TatC subunits, and a separate TatA complex, containing only TatA subunits. Substrates initially bind to the TatABC complex, which probably triggers association of the separate TatA complex to form the active translocon.

It localises to the cell inner membrane. Part of the twin-arginine translocation (Tat) system that transports large folded proteins containing a characteristic twin-arginine motif in their signal peptide across membranes. TatA could form the protein-conducting channel of the Tat system. This chain is Sec-independent protein translocase protein TatA, found in Polaromonas naphthalenivorans (strain CJ2).